A 211-amino-acid chain; its full sequence is Thymidylate kinase (211 aa).

10–17 (GPDGAGKT) is a binding site for ATP.

This sequence belongs to the thymidylate kinase family.

It catalyses the reaction dTMP + ATP = dTDP + ADP. Phosphorylation of dTMP to form dTDP in both de novo and salvage pathways of dTTP synthesis. The sequence is that of Thymidylate kinase (tmk) from Lactococcus lactis subsp. lactis (strain IL1403) (Streptococcus lactis).